Consider the following 372-residue polypeptide: GTP cyclohydrolase 1 type 2 homolog (372 aa).

Positions 67, 68, 106, 332, and 335 each coordinate a divalent metal cation.

It belongs to the GTP cyclohydrolase I type 2/NIF3 family. Homohexamer.

This Halalkalibacterium halodurans (strain ATCC BAA-125 / DSM 18197 / FERM 7344 / JCM 9153 / C-125) (Bacillus halodurans) protein is GTP cyclohydrolase 1 type 2 homolog.